The sequence spans 145 residues: Ribosomal RNA large subunit methyltransferase H (145 aa).

Residues Leu-64, Gly-93, and 112 to 117 each bind S-adenosyl-L-methionine; that span reads LSPLTF.

It belongs to the RNA methyltransferase RlmH family. In terms of assembly, homodimer.

The protein resides in the cytoplasm. The enzyme catalyses pseudouridine(1915) in 23S rRNA + S-adenosyl-L-methionine = N(3)-methylpseudouridine(1915) in 23S rRNA + S-adenosyl-L-homocysteine + H(+). Functionally, specifically methylates the pseudouridine at position 1915 (m3Psi1915) in 23S rRNA. The sequence is that of Ribosomal RNA large subunit methyltransferase H from Prochlorococcus marinus (strain NATL2A).